Reading from the N-terminus, the 122-residue chain is Large ribosomal subunit protein uL18 (122 aa).

It belongs to the universal ribosomal protein uL18 family. In terms of assembly, part of the 50S ribosomal subunit; part of the 5S rRNA/L5/L18/L25 subcomplex. Contacts the 5S and 23S rRNAs.

Functionally, this is one of the proteins that bind and probably mediate the attachment of the 5S RNA into the large ribosomal subunit, where it forms part of the central protuberance. In Agathobacter rectalis (strain ATCC 33656 / DSM 3377 / JCM 17463 / KCTC 5835 / VPI 0990) (Eubacterium rectale), this protein is Large ribosomal subunit protein uL18.